We begin with the raw amino-acid sequence, 128 residues long: Sulfurtransferase TusD (128 aa).

Cys-78 acts as the Cysteine persulfide intermediate in catalysis.

It belongs to the DsrE/TusD family. In terms of assembly, heterohexamer, formed by a dimer of trimers. The hexameric TusBCD complex contains 2 copies each of TusB, TusC and TusD. The TusBCD complex interacts with TusE.

It is found in the cytoplasm. In terms of biological role, part of a sulfur-relay system required for 2-thiolation of 5-methylaminomethyl-2-thiouridine (mnm(5)s(2)U) at tRNA wobble positions. Accepts sulfur from TusA and transfers it in turn to TusE. The chain is Sulfurtransferase TusD from Citrobacter koseri (strain ATCC BAA-895 / CDC 4225-83 / SGSC4696).